The following is a 116-amino-acid chain: Large ribosomal subunit protein bL19 (116 aa).

Belongs to the bacterial ribosomal protein bL19 family.

This protein is located at the 30S-50S ribosomal subunit interface and may play a role in the structure and function of the aminoacyl-tRNA binding site. The chain is Large ribosomal subunit protein bL19 from Solidesulfovibrio magneticus (strain ATCC 700980 / DSM 13731 / RS-1) (Desulfovibrio magneticus).